A 567-amino-acid chain; its full sequence is Oxygen-dependent choline dehydrogenase (567 aa).

4–33 contacts FAD; it reads DYIIIGAGSAGNVLAARLTEDADVTVLLLE. His-473 acts as the Proton acceptor in catalysis.

It belongs to the GMC oxidoreductase family. FAD is required as a cofactor.

The catalysed reaction is choline + A = betaine aldehyde + AH2. The enzyme catalyses betaine aldehyde + NAD(+) + H2O = glycine betaine + NADH + 2 H(+). It functions in the pathway amine and polyamine biosynthesis; betaine biosynthesis via choline pathway; betaine aldehyde from choline (cytochrome c reductase route): step 1/1. In terms of biological role, involved in the biosynthesis of the osmoprotectant glycine betaine. Catalyzes the oxidation of choline to betaine aldehyde and betaine aldehyde to glycine betaine at the same rate. In Yersinia pestis (strain Pestoides F), this protein is Oxygen-dependent choline dehydrogenase.